We begin with the raw amino-acid sequence, 380 residues long: Pregnancy-associated glycoprotein 1 (380 aa).

The first 15 residues, 1-15, serve as a signal peptide directing secretion; it reads MKWLVLLGLVAFSEC. Residues 16–53 constitute a propeptide, activation peptide; the sequence is IVKIPLRRLKTMRNVVSGKNMLNNFLKEHAYSLSQISF. N-linked (GlcNAc...) asparagine glycans are attached at residues N57 and N74. A Peptidase A1 domain is found at 71 to 377; that stretch reads YMGNITIGTP…DRGNDRIGLA (307 aa). D89 is an active-site residue. The cysteines at positions 102 and 107 are disulfide-linked. 2 N-linked (GlcNAc...) asparagine glycosylation sites follow: N125 and N182. A disulfide bridge links C261 with C265. Residue D270 is part of the active site. A disulfide bridge links C303 with C337.

This sequence belongs to the peptidase A1 family. N-Glycosylated; the glycans terminate in either N-acetyl-galactosamine (GalNAc) or N-acetyllactosamine. Terminal GalNAc on Asn-linked glycans is greatly reduced prior to parturition while lactosamine-type N-glycans remain unaltered. Trophoblast and placental tissue. Produced specifically in the invasive binucleate cells of the placenta. Becomes detectable in maternal serum soon after implantation.

Its subcellular location is the secreted. It localises to the extracellular space. Appears to be proteolytically inactive. This is Pregnancy-associated glycoprotein 1 from Bos taurus (Bovine).